The following is a 729-amino-acid chain: Fatty acid oxidation complex subunit alpha (729 aa).

The interval 1-189 (MLYKGDTLYL…KIGLVDGVVK (189 aa)) is enoyl-CoA hydratase/isomerase. Asp296 contributes to the substrate binding site. The tract at residues 311–729 (ETPKQAAVLG…ARAVGDLKTA (419 aa)) is 3-hydroxyacyl-CoA dehydrogenase. Residues Met324, Asp343, 400–402 (VVE), Lys407, and Ser429 contribute to the NAD(+) site. His450 serves as the catalytic For 3-hydroxyacyl-CoA dehydrogenase activity. Position 453 (Asn453) interacts with NAD(+). Substrate is bound by residues Asn500 and Tyr660.

It in the N-terminal section; belongs to the enoyl-CoA hydratase/isomerase family. This sequence in the C-terminal section; belongs to the 3-hydroxyacyl-CoA dehydrogenase family. Heterotetramer of two alpha chains (FadB) and two beta chains (FadA).

The catalysed reaction is a (3S)-3-hydroxyacyl-CoA + NAD(+) = a 3-oxoacyl-CoA + NADH + H(+). The enzyme catalyses a (3S)-3-hydroxyacyl-CoA = a (2E)-enoyl-CoA + H2O. It catalyses the reaction a 4-saturated-(3S)-3-hydroxyacyl-CoA = a (3E)-enoyl-CoA + H2O. It carries out the reaction (3S)-3-hydroxybutanoyl-CoA = (3R)-3-hydroxybutanoyl-CoA. The catalysed reaction is a (3Z)-enoyl-CoA = a 4-saturated (2E)-enoyl-CoA. The enzyme catalyses a (3E)-enoyl-CoA = a 4-saturated (2E)-enoyl-CoA. It participates in lipid metabolism; fatty acid beta-oxidation. Involved in the aerobic and anaerobic degradation of long-chain fatty acids via beta-oxidation cycle. Catalyzes the formation of 3-oxoacyl-CoA from enoyl-CoA via L-3-hydroxyacyl-CoA. It can also use D-3-hydroxyacyl-CoA and cis-3-enoyl-CoA as substrate. The chain is Fatty acid oxidation complex subunit alpha from Escherichia fergusonii (strain ATCC 35469 / DSM 13698 / CCUG 18766 / IAM 14443 / JCM 21226 / LMG 7866 / NBRC 102419 / NCTC 12128 / CDC 0568-73).